The sequence spans 325 residues: Elongation factor P--(R)-beta-lysine ligase (325 aa).

76–78 contributes to the substrate binding site; sequence SPE. ATP contacts are provided by residues 100 to 102 and Asn109; that span reads RNE. Residue Tyr118 coordinates substrate. Residue 244–245 participates in ATP binding; the sequence is EL. Glu251 is a binding site for substrate. Residue Gly300 coordinates ATP.

The protein belongs to the class-II aminoacyl-tRNA synthetase family. EpmA subfamily. Homodimer.

It carries out the reaction D-beta-lysine + L-lysyl-[protein] + ATP = N(6)-((3R)-3,6-diaminohexanoyl)-L-lysyl-[protein] + AMP + diphosphate + H(+). With EpmB is involved in the beta-lysylation step of the post-translational modification of translation elongation factor P (EF-P). Catalyzes the ATP-dependent activation of (R)-beta-lysine produced by EpmB, forming a lysyl-adenylate, from which the beta-lysyl moiety is then transferred to the epsilon-amino group of a conserved specific lysine residue in EF-P. In Hamiltonella defensa subsp. Acyrthosiphon pisum (strain 5AT), this protein is Elongation factor P--(R)-beta-lysine ligase.